The chain runs to 572 residues: Glutamate--tRNA ligase (572 aa).

Residues 112–122 carry the 'HIGH' region motif; the sequence is PNPNGPPSLGN.

Belongs to the class-I aminoacyl-tRNA synthetase family. Glutamate--tRNA ligase type 2 subfamily.

The protein resides in the cytoplasm. It catalyses the reaction tRNA(Glu) + L-glutamate + ATP = L-glutamyl-tRNA(Glu) + AMP + diphosphate. Its function is as follows. Catalyzes the attachment of glutamate to tRNA(Glu) in a two-step reaction: glutamate is first activated by ATP to form Glu-AMP and then transferred to the acceptor end of tRNA(Glu). The sequence is that of Glutamate--tRNA ligase from Methanocella arvoryzae (strain DSM 22066 / NBRC 105507 / MRE50).